The chain runs to 327 residues: Spermidine/putrescine import ATP-binding protein PotA (327 aa).

Residues 5–235 (IKVEAVEKHF…PKTLFVATFI (231 aa)) enclose the ABC transporter domain. 37 to 44 (GPSGCGKT) lines the ATP pocket.

It belongs to the ABC transporter superfamily. Spermidine/putrescine importer (TC 3.A.1.11.1) family. As to quaternary structure, the complex is composed of two ATP-binding proteins (PotA), two transmembrane proteins (PotB and PotC) and a solute-binding protein (PotD).

The protein resides in the cell membrane. The enzyme catalyses ATP + H2O + polyamine-[polyamine-binding protein]Side 1 = ADP + phosphate + polyamineSide 2 + [polyamine-binding protein]Side 1.. Its function is as follows. Part of the ABC transporter complex PotABCD involved in spermidine/putrescine import. Responsible for energy coupling to the transport system. This is Spermidine/putrescine import ATP-binding protein PotA from Bacillus anthracis.